The primary structure comprises 688 residues: Mitochondrial potassium channel ATP-binding subunit (688 aa).

The transit peptide at 1 to 31 (MLFHFLQAGLRQCRPPARLVGLETGLSGARG) directs the protein to the mitochondrion. Helical transmembrane passes span 115-135 (PQLIALLTAVLLAFGAALLNI), 168-188 (LKLLCLYGAQGLLTCGYIVLL), 268-288 (GLLLVVMPVLVGSGALIGSFL), and 342-362 (VLGVGIAVFQGLSNVVLNCIV). An ABC transmembrane type-1 domain is found at 121 to 409 (LTAVLLAFGA…MSVLFGQVVR (289 aa)). An ABC transporter domain is found at 442-679 (IHFKDVSFSY…GGLYADLIRR (238 aa)). 477-484 (GQSGGGKS) contacts ATP.

Belongs to the ABC transporter superfamily. ABCB family. Multidrug resistance exporter (TC 3.A.1.201) subfamily. As to quaternary structure, component of the mitochondrial potassium channel (mitoK(ATP)).

It localises to the mitochondrion inner membrane. Its function is as follows. ATP-binding subunit of the mitochondrial ATP-gated potassium channel (mitoK(ATP)). Together with pore-forming subunit CCDC51/MITOK of the mitoK(ATP) channel, mediates ATP-dependent potassium currents across the mitochondrial inner membrane. An increase in ATP intracellular levels closes the channel, inhibiting K(+) transport, whereas a decrease in ATP levels enhances K(+) uptake in the mitochondrial matrix. Plays a role in mitochondrial iron transport. Required for maintenance of normal cardiac function, possibly by influencing mitochondrial iron export and regulating the maturation of cytosolic iron sulfur cluster-containing enzymes. This chain is Mitochondrial potassium channel ATP-binding subunit, found in Xenopus tropicalis (Western clawed frog).